The primary structure comprises 180 residues: MNEETQTSELTNTDQGPQIEPGPISKWLNQKGLIHKLLEPDEIGIENLGVDPQQLFKIVSELKMNGFNYLQCQGGYDEGPGLSLVCFYHLMEMKDFNEGDKPREVRLKVFLDRNGSLRVPSLYKLFRGCDWQERETYDMFGINFDGHPHPKRLLMPEDWRGWPLRKDYIQPDFYEMQDAY.

Polar residues predominate over residues Met-1–Gly-16. A disordered region spans residues Met-1–Pro-23.

Belongs to the complex I 30 kDa subunit family. NDH-1 can be composed of about 15 different subunits; different subcomplexes with different compositions have been identified which probably have different functions.

It localises to the cellular thylakoid membrane. The enzyme catalyses a plastoquinone + NADH + (n+1) H(+)(in) = a plastoquinol + NAD(+) + n H(+)(out). It carries out the reaction a plastoquinone + NADPH + (n+1) H(+)(in) = a plastoquinol + NADP(+) + n H(+)(out). Functionally, NDH-1 shuttles electrons from an unknown electron donor, via FMN and iron-sulfur (Fe-S) centers, to quinones in the respiratory and/or the photosynthetic chain. The immediate electron acceptor for the enzyme in this species is believed to be plastoquinone. Couples the redox reaction to proton translocation, and thus conserves the redox energy in a proton gradient. Cyanobacterial NDH-1 also plays a role in inorganic carbon-concentration. In Prochlorococcus marinus (strain MIT 9211), this protein is NAD(P)H-quinone oxidoreductase subunit J.